We begin with the raw amino-acid sequence, 477 residues long: Lactate utilization protein B (477 aa).

4Fe-4S ferredoxin-type domains follow at residues 304–334 (GTQF…GHSY) and 353–382 (YDTY…LHDL). The [4Fe-4S] cluster site is built by cysteine 313, cysteine 316, cysteine 319, cysteine 323, cysteine 366, cysteine 369, and cysteine 373. The tract at residues 443-463 (GPKPLQAWTNSRDFPMPDDEN) is disordered.

The protein belongs to the LutB/YkgF family.

Its function is as follows. Is involved in L-lactate degradation and allows cells to grow with lactate as the sole carbon source. Has probably a role as an electron transporter during oxidation of L-lactate. In Macrococcus caseolyticus (strain JCSC5402) (Macrococcoides caseolyticum), this protein is Lactate utilization protein B.